Here is a 628-residue protein sequence, read N- to C-terminus: MESLVFARRSGPTPSAAELARPLAEGLIKSPKPLMKKQAVKRHHHKHNLRHRYEFLETLGKGTYGKVKKARESSGRLVAIKSIRKDKIKDEQDLMHIRREIEIMSSLNHPHIIAIHEVFENSSKIVIVMEYASRGDLYDYISERQQLSEREARHFFRQIVSAVHYCHQNRVVHRDLKLENILLDANGNIKIADFGLSNLYHQGKFLQTFCGSPLYASPEIVNGKPYTGPEVDSWSLGVLLYILVHGTMPFDGHDHKILVKQISNGAYREPPKPSDACGLIRWLLMVNPTRRATLEDVASHWWVNWGYATRVGEQEAPHEGGHPGSDSARASMADWLRRSSRPLLENGAKVCSFFKQHAPGGGSTTPGLERQHSLKKSRKENDMAQSLHSDTADDTAHRPGKSNLKLPKGILKKKVSASAEGVQEDPPELSPIPASPGQAAPLLPKKGILKKPRQRESGYYSSPEPSESGELLDAGDVFVSGDPKEQKPPQASGLLLHRKGILKLNGKFSQTALELAAPTTFGSLDELAPPRPLARASRPSGAVSEDSILSSESFDQLDLPERLPEPPLRGCVSVDNLTGLEEPPSEGPGSCLRRWRQDPLGDSCFSLTDCQEVTATYRQALRVCSKLT.

Position 1 is an N-acetylmethionine (Met-1). Residues 53–303 form the Protein kinase domain; it reads YEFLETLGKG…LEDVASHWWV (251 aa). Residues 59–67 and Lys-81 each bind ATP; that span reads LGKGTYGKV. Catalysis depends on Asp-175, which acts as the Proton acceptor. Thr-208 carries the post-translational modification Phosphothreonine; by LKB1. Residues 355-493 form a disordered region; it reads KQHAPGGGST…KEQKPPQASG (139 aa). Ser-435 carries the post-translational modification Phosphoserine. Over residues 457 to 469 the composition is skewed to low complexity; that stretch reads SGYYSSPEPSESG. Ser-523, Ser-544, Ser-547, and Ser-573 each carry phosphoserine. The tract at residues 531–562 is disordered; it reads RPLARASRPSGAVSEDSILSSESFDQLDLPER.

This sequence belongs to the protein kinase superfamily. CAMK Ser/Thr protein kinase family. SNF1 subfamily. Mg(2+) is required as a cofactor. Post-translationally, phosphorylated at Thr-208 by STK11/LKB1 in complex with STE20-related adapter-alpha (STRADA) pseudo kinase and CAB39. Autophosphorylation is also possible at Thr-208.

It catalyses the reaction L-seryl-[protein] + ATP = O-phospho-L-seryl-[protein] + ADP + H(+). The catalysed reaction is L-threonyl-[protein] + ATP = O-phospho-L-threonyl-[protein] + ADP + H(+). Its activity is regulated as follows. Activated by phosphorylation on Thr-208. Stress-activated kinase involved in tolerance to glucose starvation. Induces cell-cell detachment by increasing F-actin conversion to G-actin. Expression is induced by CD95 or TNF-alpha, via NF-kappa-B. Protects cells from CD95-mediated apoptosis and is required for the increased motility and invasiveness of CD95-activated tumor cells. Phosphorylates LATS1 and LATS2. Plays a key role in neural tube closure during embryonic development through LATS2 phosphorylation and regulation of the nuclear localization of YAP1 a critical downstream regulatory target in the Hippo signaling pathway. This chain is NUAK family SNF1-like kinase 2, found in Homo sapiens (Human).